Consider the following 313-residue polypeptide: MRLVTLAPAKVNLVLRVGPVRADGYHDLRTLMVPLDLGDRVDVRVSARPGPVRCTVPGRPELDGPENLAARAAEAFRRRFGVDRAVSIRIEKRTPVTAGLGGGSSDAAAVLRCLARALRVRDGAALAALALEIGSDVPFFLGPGPAWAAGRGERLSRAEVPPLDLVLVYPADPSLAIRAGDAYRWLDEARASGSQAPRRLGRPGRWRPTLLGNDLQAPCVARKPALQALLGLLVGAGATAAIMSGSGPTVFGIFPGRGAARGAALAIQGRAKGGAAGVQVLLARTVRRHPRVSPWRSPRSASSRSTRRSSRPT.

Lys10 is a catalytic residue. An ATP-binding site is contributed by 95–105; sequence PVTAGLGGGSS. Asp136 is a catalytic residue. A disordered region spans residues 289-313; that stretch reads HPRVSPWRSPRSASSRSTRRSSRPT. A compositionally biased stretch (low complexity) spans 292-304; the sequence is VSPWRSPRSASSR.

This sequence belongs to the GHMP kinase family. IspE subfamily.

It carries out the reaction 4-CDP-2-C-methyl-D-erythritol + ATP = 4-CDP-2-C-methyl-D-erythritol 2-phosphate + ADP + H(+). It functions in the pathway isoprenoid biosynthesis; isopentenyl diphosphate biosynthesis via DXP pathway; isopentenyl diphosphate from 1-deoxy-D-xylulose 5-phosphate: step 3/6. In terms of biological role, catalyzes the phosphorylation of the position 2 hydroxy group of 4-diphosphocytidyl-2C-methyl-D-erythritol. The polypeptide is 4-diphosphocytidyl-2-C-methyl-D-erythritol kinase (Anaeromyxobacter sp. (strain K)).